The primary structure comprises 299 residues: MKKIGTELLKRGFAKMVKHGVVMDVTNPEQARIAEDAGAAAVMALERVPADIRAEGGVSRMSDPEMILEIKDEVSIPVMAKARIGHFVEAQALESLGIDMVDESEVLTPADEIHHIDKNAFDIPFVCGARNLGEALRRIDEGAAMIRTKGEAGTGDVIEAVKHMRAVNEGIAKVVGYYEMGCDRELVQMARNELKVPMDLVYEVAELKRLPVVNFAAGGIATPADAALMMQLGCDGVFVGSGIFKSGNPEERARAIVEATYNYDKPDVIAEVSKNLGEAMVGINVDAIPEKELLAKRGI.

Asp-24 is a D-ribose 5-phosphate binding site. Lys-81 serves as the catalytic Schiff-base intermediate with D-ribose 5-phosphate. A D-ribose 5-phosphate-binding site is contributed by Gly-153. Arg-165 serves as a coordination point for D-glyceraldehyde 3-phosphate. Residues Gly-219 and 240–241 (GS) contribute to the D-ribose 5-phosphate site.

The protein belongs to the PdxS/SNZ family. As to quaternary structure, in the presence of PdxT, forms a dodecamer of heterodimers.

It catalyses the reaction aldehydo-D-ribose 5-phosphate + D-glyceraldehyde 3-phosphate + L-glutamine = pyridoxal 5'-phosphate + L-glutamate + phosphate + 3 H2O + H(+). It participates in cofactor biosynthesis; pyridoxal 5'-phosphate biosynthesis. Catalyzes the formation of pyridoxal 5'-phosphate from ribose 5-phosphate (RBP), glyceraldehyde 3-phosphate (G3P) and ammonia. The ammonia is provided by the PdxT subunit. Can also use ribulose 5-phosphate and dihydroxyacetone phosphate as substrates, resulting from enzyme-catalyzed isomerization of RBP and G3P, respectively. The sequence is that of Pyridoxal 5'-phosphate synthase subunit PdxS from Methanococcus aeolicus (strain ATCC BAA-1280 / DSM 17508 / OCM 812 / Nankai-3).